The primary structure comprises 90 residues: Putative regulatory protein NT01CX_2250 (90 aa).

Belongs to the RemA family.

This Clostridium novyi (strain NT) protein is Putative regulatory protein NT01CX_2250.